The sequence spans 350 residues: tRNA dimethylallyltransferase (350 aa).

34–41 lines the ATP pocket; sequence GPTASGKT. Residue 36-41 participates in substrate binding; the sequence is TASGKT. Interaction with substrate tRNA stretches follow at residues 63-66, 187-191, and 274-279; these read DSAL, QRIQR, and RCVGYR.

It belongs to the IPP transferase family. As to quaternary structure, monomer. It depends on Mg(2+) as a cofactor.

The catalysed reaction is adenosine(37) in tRNA + dimethylallyl diphosphate = N(6)-dimethylallyladenosine(37) in tRNA + diphosphate. Its function is as follows. Catalyzes the transfer of a dimethylallyl group onto the adenine at position 37 in tRNAs that read codons beginning with uridine, leading to the formation of N6-(dimethylallyl)adenosine (i(6)A). This Paracidovorax citrulli (strain AAC00-1) (Acidovorax citrulli) protein is tRNA dimethylallyltransferase.